Reading from the N-terminus, the 380-residue chain is Queuine tRNA-ribosyltransferase (380 aa).

Asp96 serves as the catalytic Proton acceptor. Residues 96–100 (DSGGF), Asp150, Gln193, and Gly220 contribute to the substrate site. The interval 251-257 (GVGAPDS) is RNA binding. The active-site Nucleophile is the Asp270. An RNA binding; important for wobble base 34 recognition region spans residues 275–279 (TRIAR). Zn(2+)-binding residues include Cys308, Cys310, Cys313, and His339.

The protein belongs to the queuine tRNA-ribosyltransferase family. As to quaternary structure, homodimer. Within each dimer, one monomer is responsible for RNA recognition and catalysis, while the other monomer binds to the replacement base PreQ1. Requires Zn(2+) as cofactor.

It catalyses the reaction 7-aminomethyl-7-carbaguanine + guanosine(34) in tRNA = 7-aminomethyl-7-carbaguanosine(34) in tRNA + guanine. It participates in tRNA modification; tRNA-queuosine biosynthesis. Its function is as follows. Catalyzes the base-exchange of a guanine (G) residue with the queuine precursor 7-aminomethyl-7-deazaguanine (PreQ1) at position 34 (anticodon wobble position) in tRNAs with GU(N) anticodons (tRNA-Asp, -Asn, -His and -Tyr). Catalysis occurs through a double-displacement mechanism. The nucleophile active site attacks the C1' of nucleotide 34 to detach the guanine base from the RNA, forming a covalent enzyme-RNA intermediate. The proton acceptor active site deprotonates the incoming PreQ1, allowing a nucleophilic attack on the C1' of the ribose to form the product. After dissociation, two additional enzymatic reactions on the tRNA convert PreQ1 to queuine (Q), resulting in the hypermodified nucleoside queuosine (7-(((4,5-cis-dihydroxy-2-cyclopenten-1-yl)amino)methyl)-7-deazaguanosine). This chain is Queuine tRNA-ribosyltransferase, found in Streptococcus pyogenes serotype M1.